An 890-amino-acid polypeptide reads, in one-letter code: Phosphatidate phosphatase LPIN1 (890 aa).

The interval 1–108 (MNYVGQLAGQ…IPMHLATSPI (108 aa)) is N-LIP. Phosphoserine is present on residues Ser106 and Ser150. Disordered stretches follow at residues 125–183 (VDRM…DMFP), 228–300 (SYPN…SSRK), 365–392 (KPPSASVVQTANKTDSPSRKRDKRSRHL), and 421–456 (SGLAKHASDNGARSANQSPQSVGSSGVDSGVESTSD). Residues 152 to 161 (VKKRRKRRRK) are compositionally biased toward basic residues. The Nuclear localization signal signature appears at 153–158 (KKRRKR). Composition is skewed to basic and acidic residues over residues 162–172 (SQLDSLKRDDN) and 252–265 (SDSELVSKSTERTG). A phosphoserine mark is found at Ser252, Ser254, and Ser260. The residue at position 264 (Thr264) is a Phosphothreonine. Residue Ser294 is modified to Phosphoserine. N6-acetyllysine is present on Lys425. Residues 431–440 (GARSANQSPQ) are compositionally biased toward polar residues. Phosphoserine is present on residues Ser434, Ser438, and Ser449. Over residues 441–456 (SVGSSGVDSGVESTSD) the composition is skewed to low complexity. A Glycyl lysine isopeptide (Lys-Gly) (interchain with G-Cter in SUMO) cross-link involves residue Lys565. The tract at residues 566–616 (EESKPEQCLAGKAHSTGEQPPQLSLATRVKHESSSSDEERAAAKPSNAGHL) is disordered. The span at 581 to 590 (TGEQPPQLSL) shows a compositional bias: polar residues. Residues 594-607 (VKHESSSSDEERAA) are compositionally biased toward basic and acidic residues. Residue Lys595 is modified to N6-acetyllysine. Residue Lys595 forms a Glycyl lysine isopeptide (Lys-Gly) (interchain with G-Cter in SUMO) linkage. Residues Ser600 and Ser601 each carry the phosphoserine modification. The segment at 624-830 (YKKTLRLTSE…VNPKGELVQE (207 aa)) is C-LIP. A DXDXT motif motif is present at residues 678–682 (DIDGT). The LXXIL motif motif lies at 689–693 (LGHIL). Phosphoserine occurs at positions 887 and 889.

The protein belongs to the lipin family. Interacts (via LXXIL motif) with PPARA. Interacts with PPARGC1A. Interaction with PPARA and PPARGC1A leads to the formation of a complex that modulates gene transcription. Interacts with MEF2C. The cofactor is Mg(2+). Mn(2+) serves as cofactor. Post-translationally, phosphorylated at multiple sites by mTOR in response to insulin, leading to its inactivation. Phosphorylation does not affect the catalytic activity but regulates the localization. Phosphorylation is decreased by epinephrine. Dephosphorylated by the CTDNEP1-CNEP1R1 complex. Dephosphorylation following mTOR inhibition promotes its activity. In terms of processing, acetylation at Lys-425 and Lys-595 by KAT5 in response to fatty acids promotes translocation to the endoplasmic reticulum and synthesis of diacylglycerol. Sumoylated. As to expression, specifically expressed in skeletal muscle. Also abundant in adipose tissue. Lower levels in some portions of the digestive tract.

It localises to the cytoplasm. It is found in the cytosol. Its subcellular location is the endoplasmic reticulum membrane. The protein resides in the nucleus membrane. The enzyme catalyses a 1,2-diacyl-sn-glycero-3-phosphate + H2O = a 1,2-diacyl-sn-glycerol + phosphate. It carries out the reaction 1-octadecanoyl-2-(4Z,7Z,10Z,13Z,16Z,19Z-docosahexaenoyl)-sn-glycero-3-phosphate + H2O = 1-octadecanoyl-2-(4Z,7Z,10Z,13Z,16Z,19Z-docosahexaenoyl)-sn-glycerol + phosphate. The catalysed reaction is 1-octadecanoyl-2-(5Z,8Z,11Z,14Z-eicosatetraenoyl)-sn-glycero-3-phosphate + H2O = 1-octadecanoyl-2-(5Z,8Z,11Z,14Z-eicosatetraenoyl)-sn-glycerol + phosphate. It catalyses the reaction 1-octadecanoyl-2-(9Z,12Z-octadecadienoyl)-sn-glycero-3-phosphate + H2O = 1-octadecanoyl-2-(9Z,12Z)-octadecadienoyl-sn-glycerol + phosphate. The enzyme catalyses 1-octadecanoyl-2-(9Z-octadecenoyl)-sn-glycero-3-phosphate + H2O = 1-octadecanoyl-2-(9Z-octadecenoyl)-sn-glycerol + phosphate. It carries out the reaction 1-hexadecanoyl-2-(4Z,7Z,10Z,13Z,16Z,19Z-docosahexaenoyl)-sn-glycero-3-phosphate + H2O = 1-hexadecanoyl-2-(4Z,7Z,10Z,13Z,16Z,19Z-docosahexaenoyl)-sn-glycerol + phosphate. The catalysed reaction is 1,2-dioctadecanoyl-sn-glycero-3-phosphate + H2O = 1,2-dioctadecanoyl-sn-glycerol + phosphate. It catalyses the reaction 1-hexadecanoyl-2-(5Z,8Z,11Z,14Z-eicosatetraenoyl)-sn-glycero-3-phosphate + H2O = 1-hexadecanoyl-2-(5Z,8Z,11Z,14Z-eicosatetraenoyl)-sn-glycerol + phosphate. The enzyme catalyses 1-hexadecanoyl-2-(9Z,12Z-octadecadienoyl)-sn-glycero-3-phosphate + H2O = 1-hexadecanoyl-2-(9Z,12Z-octadecadienoyl)-sn-glycerol + phosphate. It carries out the reaction 1-hexadecanoyl-2-(9Z-octadecenoyl)-sn-glycero-3-phosphate + H2O = 1-hexadecanoyl-2-(9Z-octadecenoyl)-sn-glycerol + phosphate. The catalysed reaction is 1,2-di-(4Z,7Z,10Z,13Z,16Z,19Z-docosahexaenoyl)-sn-glycero-3-phosphate + H2O = 1,2-di-(4Z,7Z,10Z,13Z,16Z,19Z-docosahexaenoyl)-sn-glycerol + phosphate. It catalyses the reaction 1,2-di-(5Z,8Z,11Z,14Z)-eicosatetraenoyl-sn-glycero-3-phosphate + H2O = 1,2-di-(5Z,8Z,11Z,14Z)-eicosatetraenoyl-sn-glycerol + phosphate. The enzyme catalyses 1,2-di-(9Z,12Z-octadecadienoyl)-sn-glycero-3-phosphate + H2O = 1,2-di-(9Z,12Z-octadecadienoyl)-sn-glycerol + phosphate. It carries out the reaction 1,2-di-(9Z-octadecenoyl)-sn-glycero-3-phosphate + H2O = 1,2-di-(9Z-octadecenoyl)-sn-glycerol + phosphate. The catalysed reaction is 1,2-dihexadecanoyl-sn-glycero-3-phosphate + H2O = 1,2-dihexadecanoyl-sn-glycerol + phosphate. With respect to regulation, potently inhibited by sphingolipids, in particular, the sphingoid bases sphinganine and sphingosine and ceramide-1-phosphate. Inhibited by concentrations of Mg(2+) and Mn(2+) above their optimums and by Ca(2+), Zn(2+), N-ethylmaleimide and propranolol. Sertraline and propanolol inhibit activity in dose-dependent manners with IC(50) values of 103 uM and 226 uM, respectively. Its activity is regulated as follows. Sertraline and propanolol inhibit activity in dose-dependent manners with IC(50) values of 108 uM and 271 uM, respectively. With respect to regulation, sertraline and propanolol inhibit activity in dose-dependent manners with IC(50) values of 143 uM and 227 uM, respectively. Acts as a magnesium-dependent phosphatidate phosphatase enzyme which catalyzes the conversion of phosphatidic acid to diacylglycerol during triglyceride, phosphatidylcholine and phosphatidylethanolamine biosynthesis and therefore controls the metabolism of fatty acids at different levels. Is involved in adipocyte differentiation. Recruited at the mitochondrion outer membrane and is involved in mitochondrial fission by converting phosphatidic acid to diacylglycerol. Acts also as nuclear transcriptional coactivator for PPARGC1A/PPARA regulatory pathway to modulate lipid metabolism gene expression. The polypeptide is Phosphatidate phosphatase LPIN1 (Homo sapiens (Human)).